Consider the following 794-residue polypeptide: Ubiquitin carboxyl-terminal hydrolase 10 (794 aa).

An N-acetylalanine modification is found at A2. The tract at residues 2–99 is interaction with p53/TP53; it reads ALHNPQYIFG…ILGCPTSKKT (98 aa). Residues 6–21 form a G3BP1-binding region; sequence PQYIFGDFSPDEFNQF. Residues T24 and T99 each carry the phosphothreonine modification. The interval 123–164 is disordered; sequence ESSSNAEAETLENDSGAGGLGQRERKKKKKRPPGYYSYLKDG. S209, S224, and S316 each carry phosphoserine. The tract at residues 303-326 is disordered; it reads ESADLDPAKPESQSPPAESALSVS. The segment covering 313-326 has biased composition (polar residues); the sequence is ESQSPPAESALSVS. S332 bears the Phosphoserine; by ATM mark. 2 positions are modified to phosphoserine: S361 and S366. Positions 411–791 constitute a USP domain; sequence RGLINKGNWC…TAYLLYYRRV (381 aa). The active-site Nucleophile is the C420. Phosphoserine is present on S543. Residues 546-588 are disordered; sequence HEKHSVSNGPGSHLIEDEELEDTGEGSEDEWEQVGPKNKTSVT. Positions 561–577 are enriched in acidic residues; that stretch reads EDEELEDTGEGSEDEWE. A Phosphothreonine modification is found at T568. Position 572 is a phosphoserine (S572). The active-site Proton acceptor is H745.

Belongs to the peptidase C19 family. USP10 subfamily. Found in a deubiquitination complex with TANK, USP10 and ZC3H12A; this complex inhibits genotoxic stress- or interleukin-1-beta (IL1B)-mediated NF-kappa-B activation by promoting IKBKG or TRAF6 deubiquitination. Interacts with IKBKG; this interaction increases in response to DNA damage. Interacts with TANK; this interaction increases in response to DNA damage. Interacts with TRAF6; this interaction increases in response to DNA damage. Interacts with ZC3H12A; this interaction increases in response to DNA damage. Interacts with G3BP1 (via NTF2 domain) and G3BP2 (via NTF2 domain); inhibiting stress granule formation. In terms of processing, phosphorylated by ATM following DNA damage, leading to stabilization and translocation it to the nucleus. Ubiquitinated. Deubiquitinated by USP13.

Its subcellular location is the cytoplasm. It is found in the nucleus. It localises to the early endosome. It carries out the reaction Thiol-dependent hydrolysis of ester, thioester, amide, peptide and isopeptide bonds formed by the C-terminal Gly of ubiquitin (a 76-residue protein attached to proteins as an intracellular targeting signal).. Specifically inhibited by spautin-1 (specific and potent autophagy inhibitor-1), a derivative of MBCQ that binds to USP10 and inhibits deubiquitinase activity. Regulated by PIK3C3/VPS34-containing complexes. Hydrolase that can remove conjugated ubiquitin from target proteins such as p53/TP53, RPS2/us5, RPS3/us3, RPS10/eS10, BECN1, SNX3 and CFTR. Acts as an essential regulator of p53/TP53 stability: in unstressed cells, specifically deubiquitinates p53/TP53 in the cytoplasm, leading to counteract MDM2 action and stabilize p53/TP53. Following DNA damage, translocates to the nucleus and deubiquitinates p53/TP53, leading to regulate the p53/TP53-dependent DNA damage response. Component of a regulatory loop that controls autophagy and p53/TP53 levels: mediates deubiquitination of BECN1, a key regulator of autophagy, leading to stabilize the PIK3C3/VPS34-containing complexes. In turn, PIK3C3/VPS34-containing complexes regulate USP10 stability, suggesting the existence of a regulatory system by which PIK3C3/VPS34-containing complexes regulate p53/TP53 protein levels via USP10 and USP13. Does not deubiquitinate MDM2. Plays a key role in 40S ribosome subunit recycling when a ribosome has stalled during translation: acts both by inhibiting formation of stress granules, which store stalled translation pre-initiation complexes, and mediating deubiquitination of 40S ribosome subunits. Acts as a negative regulator of stress granules formation by lowering G3BP1 and G3BP2 valence, thereby preventing G3BP1 and G3BP2 ability to undergo liquid-liquid phase separation (LLPS) and assembly of stress granules. Promotes 40S ribosome subunit recycling following ribosome dissociation in response to ribosome stalling by mediating deubiquitination of 40S ribosomal proteins RPS2/us5, RPS3/us3 and RPS10/eS10, thereby preventing their degradation by the proteasome. Part of a ribosome quality control that takes place when ribosomes have stalled during translation initiation (iRQC): USP10 acts by removing monoubiquitination of RPS2/us5 and RPS3/us3, promoting 40S ribosomal subunit recycling. Deubiquitinates CFTR in early endosomes, enhancing its endocytic recycling. Involved in a TANK-dependent negative feedback response to attenuate NF-kappa-B activation via deubiquitinating IKBKG or TRAF6 in response to interleukin-1-beta (IL1B) stimulation or upon DNA damage. Deubiquitinates TBX21 leading to its stabilization. Plays a negative role in the RLR signaling pathway upon RNA virus infection by blocking the RIGI-mediated MAVS activation. Mechanistically, removes the unanchored 'Lys-63'-linked polyubiquitin chains of MAVS to inhibit its aggregation, essential for its activation. The polypeptide is Ubiquitin carboxyl-terminal hydrolase 10 (Usp10) (Rattus norvegicus (Rat)).